The chain runs to 595 residues: Glutamyl-tRNA(Gln) amidotransferase subunit B, mitochondrial (595 aa).

The N-terminal 114 residues, 1 to 114 (MPRLWYSRYL…RAPTSTVAEP (114 aa)), are a transit peptide targeting the mitochondrion. A disordered region spans residues 59–78 (KEEAKRSKSQSRNGRGKKQV).

The protein belongs to the GatB/GatE family. GatB subfamily. As to quaternary structure, subunit of the heterotrimeric GatCAB amidotransferase (AdT) complex, composed of A, B and C subunits.

The protein resides in the mitochondrion. It carries out the reaction L-glutamyl-tRNA(Gln) + L-glutamine + ATP + H2O = L-glutaminyl-tRNA(Gln) + L-glutamate + ADP + phosphate + H(+). In terms of biological role, allows the formation of correctly charged Gln-tRNA(Gln) through the transamidation of misacylated Glu-tRNA(Gln) in the mitochondria. The reaction takes place in the presence of glutamine and ATP through an activated gamma-phospho-Glu-tRNA(Gln). In Talaromyces stipitatus (strain ATCC 10500 / CBS 375.48 / QM 6759 / NRRL 1006) (Penicillium stipitatum), this protein is Glutamyl-tRNA(Gln) amidotransferase subunit B, mitochondrial.